Here is a 601-residue protein sequence, read N- to C-terminus: Glutathione-regulated potassium-efflux system protein KefB (601 aa).

Helical transmembrane passes span 4 to 24 (SDFL…VPLA), 29 to 49 (IGAV…GLGF), 55 to 75 (EILH…GLEL), 87 to 107 (IFGV…GLLM), 115 to 135 (AAVV…LQLM), 152 to 172 (VLLF…LLAG), 177 to 197 (HFDW…LIGG), 207 to 227 (FIAA…LVLG), 230 to 250 (LFMD…GVLL), 268 to 288 (GLLL…GVLY), 291 to 311 (LLWV…VLYL), 324 to 344 (MQFA…FSTA), and 356 to 376 (ALLL…MKLV). The region spanning 400 to 519 (KPQVIVVGFG…AGVTQFSRET (120 aa)) is the RCK N-terminal domain.

The protein belongs to the monovalent cation:proton antiporter 2 (CPA2) transporter (TC 2.A.37) family. KefB subfamily. Interacts with the regulatory subunit KefG.

The protein localises to the cell inner membrane. Functionally, pore-forming subunit of a potassium efflux system that confers protection against electrophiles. Catalyzes K(+)/H(+) antiport. This Escherichia coli O1:K1 / APEC protein is Glutathione-regulated potassium-efflux system protein KefB.